Here is a 309-residue protein sequence, read N- to C-terminus: tRNA-dihydrouridine(16) synthase (309 aa).

Residues 7–9 and glutamine 68 contribute to the FMN site; that span reads PME. Cysteine 98 serves as the catalytic Proton donor. FMN is bound by residues arginine 137, asparagine 198, and 220 to 221; that span reads GC.

Belongs to the Dus family. DusC subfamily. FMN is required as a cofactor.

It carries out the reaction 5,6-dihydrouridine(16) in tRNA + NADP(+) = uridine(16) in tRNA + NADPH + H(+). It catalyses the reaction 5,6-dihydrouridine(16) in tRNA + NAD(+) = uridine(16) in tRNA + NADH + H(+). Functionally, catalyzes the synthesis of 5,6-dihydrouridine (D), a modified base found in the D-loop of most tRNAs, via the reduction of the C5-C6 double bond in target uridines. Specifically modifies U16 in tRNAs. The polypeptide is tRNA-dihydrouridine(16) synthase (Azotobacter vinelandii).